Consider the following 253-residue polypeptide: 5'-nucleotidase SurE (253 aa).

A divalent metal cation-binding residues include aspartate 8, aspartate 9, serine 39, and asparagine 92.

Belongs to the SurE nucleotidase family. A divalent metal cation serves as cofactor.

The protein localises to the cytoplasm. The enzyme catalyses a ribonucleoside 5'-phosphate + H2O = a ribonucleoside + phosphate. Nucleotidase that shows phosphatase activity on nucleoside 5'-monophosphates. The sequence is that of 5'-nucleotidase SurE from Burkholderia mallei (strain NCTC 10247).